The primary structure comprises 286 residues: MTNPESTAIDPVAAMGTDHTEAPAHPLHKVLSFVRRSGRLDDRLQRAWDNYAGTYLLDIAAGNLLDVREGVTLDRAFVESAWGNDNPLIVEIGTGQGENVVAAAAAHPETNFLALEVYDPGVAHTLLLAGKQGLTNIRVAQVNAPELFKVTAAGTVAEVWTFFPDPWPKKKHHKRRIVQKAMAGDIHRALVTDGVWRIATDIEDYALHVHEVMDGLDGWKNLGSVTVSLPLEHVGKGNADMAADMPHADFTESERFEGRVLTNFEKKGLAAGRVIHDFTYQAVTLN.

The disordered stretch occupies residues 1-21; the sequence is MTNPESTAIDPVAAMGTDHTE. S-adenosyl-L-methionine is bound by residues Glu91, Glu116, Asn143, and Asp165. Asp165 is a catalytic residue. Substrate-binding positions include Lys169, Asp201, and 262-265; that span reads TNFE.

Belongs to the class I-like SAM-binding methyltransferase superfamily. TrmB family.

It catalyses the reaction guanosine(46) in tRNA + S-adenosyl-L-methionine = N(7)-methylguanosine(46) in tRNA + S-adenosyl-L-homocysteine. It participates in tRNA modification; N(7)-methylguanine-tRNA biosynthesis. Its function is as follows. Catalyzes the formation of N(7)-methylguanine at position 46 (m7G46) in tRNA. The polypeptide is tRNA (guanine-N(7)-)-methyltransferase (Bifidobacterium longum (strain NCC 2705)).